The sequence spans 238 residues: Orotidine 5'-phosphate decarboxylase (238 aa).

Residues Asp-13, Lys-35, 62–71 (DLKFHDIPNT), Thr-121, Arg-182, Gln-191, Gly-211, and Arg-212 contribute to the substrate site. Lys-64 functions as the Proton donor in the catalytic mechanism.

This sequence belongs to the OMP decarboxylase family. Type 1 subfamily. In terms of assembly, homodimer.

The catalysed reaction is orotidine 5'-phosphate + H(+) = UMP + CO2. It functions in the pathway pyrimidine metabolism; UMP biosynthesis via de novo pathway; UMP from orotate: step 2/2. Its function is as follows. Catalyzes the decarboxylation of orotidine 5'-monophosphate (OMP) to uridine 5'-monophosphate (UMP). This chain is Orotidine 5'-phosphate decarboxylase, found in Saccharophagus degradans (strain 2-40 / ATCC 43961 / DSM 17024).